The primary structure comprises 2278 residues: Protein Ycf2 (2278 aa).

This sequence belongs to the Ycf2 family.

It localises to the plastid. Its subcellular location is the chloroplast stroma. The protein resides in the chromoplast stroma. In terms of biological role, probable ATPase of unknown function. Its presence in a non-photosynthetic plant (Epifagus virginiana) and experiments in tobacco indicate that it has an essential function which is probably not related to photosynthesis. In Solanum lycopersicum (Tomato), this protein is Protein Ycf2 (ycf2-A).